The sequence spans 214 residues: MKFFIDTADVKEIREANELGLVDGVTTNPSLIAKSGRRFEEVIKEITGIVDGPISAEVISLEHDGMIAEATELAKIHPNIVIKLPMTPEGLKATKTLYKRGIKTNVTLIFTPMQALLAAKAGATYVSPFVGRLDDISQNGMAIIQEIRTIFDNYGMDAEIIVASIRNPIHVLDSALIGADICTIPYSVMLQLAKHPLTDAGIKKFLEDWEKVPK.

The Schiff-base intermediate with substrate role is filled by Lys83.

Belongs to the transaldolase family. Type 3B subfamily.

The protein localises to the cytoplasm. It catalyses the reaction D-sedoheptulose 7-phosphate + D-glyceraldehyde 3-phosphate = D-erythrose 4-phosphate + beta-D-fructose 6-phosphate. It participates in carbohydrate degradation; pentose phosphate pathway; D-glyceraldehyde 3-phosphate and beta-D-fructose 6-phosphate from D-ribose 5-phosphate and D-xylulose 5-phosphate (non-oxidative stage): step 2/3. Functionally, transaldolase is important for the balance of metabolites in the pentose-phosphate pathway. The polypeptide is Probable transaldolase (Geobacter sp. (strain M21)).